The primary structure comprises 271 residues: MKITNTLLNAAALLAVTEAATITKFFTASTQTLFVTQTSQTVVATKSFVETIYSAPPKQLTSKTQDSTSPTTSSVNSLTSSSATSYVETTTPAPSSSTLTTSTISSSTASEDSDATPTADVEFAEEILKEHNVKRALHGVPALSWSNKLAEYAQDYANTGFDCSNLNLKHSGGPYGENLAAGYMGGISPVDAWYDEISMVDWNNVDFTESTGHFTQLVWRSTTQVGCAKMMCSTAWRQITVCEYLPRGNVIGLNVTSGHSYFVDNVLPPLK.

The signal sequence occupies residues 1–19; sequence MKITNTLLNAAALLAVTEA. A disordered region spans residues 59–118; it reads QLTSKTQDSTSPTTSSVNSLTSSSATSYVETTTPAPSSSTLTTSTISSSTASEDSDATPT. Over residues 67–118 the composition is skewed to low complexity; it reads STSPTTSSVNSLTSSSATSYVETTTPAPSSSTLTTSTISSSTASEDSDATPT. The SCP domain occupies 128-244; sequence LKEHNVKRAL…AWRQITVCEY (117 aa). N254 carries an N-linked (GlcNAc...) asparagine glycan.

Belongs to the CRISP family.

The protein localises to the secreted. Its subcellular location is the cell wall. Its function is as follows. Cell wall protein involved in cell wall integrity and which plays a role in virulence. The chain is Repressed by EFG1 protein 1 (RBE1) from Candida albicans (strain SC5314 / ATCC MYA-2876) (Yeast).